The primary structure comprises 71 residues: NAD(P)H-quinone oxidoreductase subunit O (71 aa).

Belongs to the complex I NdhO subunit family. In terms of assembly, NDH-1 can be composed of about 15 different subunits; different subcomplexes with different compositions have been identified which probably have different functions.

The protein localises to the cellular thylakoid membrane. The enzyme catalyses a plastoquinone + NADH + (n+1) H(+)(in) = a plastoquinol + NAD(+) + n H(+)(out). The catalysed reaction is a plastoquinone + NADPH + (n+1) H(+)(in) = a plastoquinol + NADP(+) + n H(+)(out). NDH-1 shuttles electrons from an unknown electron donor, via FMN and iron-sulfur (Fe-S) centers, to quinones in the respiratory and/or the photosynthetic chain. The immediate electron acceptor for the enzyme in this species is believed to be plastoquinone. Couples the redox reaction to proton translocation, and thus conserves the redox energy in a proton gradient. Cyanobacterial NDH-1 also plays a role in inorganic carbon-concentration. The polypeptide is NAD(P)H-quinone oxidoreductase subunit O (Nostoc punctiforme (strain ATCC 29133 / PCC 73102)).